Reading from the N-terminus, the 51-residue chain is Large ribosomal subunit protein eL39 (51 aa).

It belongs to the eukaryotic ribosomal protein eL39 family.

The chain is Large ribosomal subunit protein eL39 (rpl39e) from Pyrobaculum aerophilum (strain ATCC 51768 / DSM 7523 / JCM 9630 / CIP 104966 / NBRC 100827 / IM2).